Reading from the N-terminus, the 534-residue chain is Cytidylyl-2-hydroxyethylphosphonate methyltransferase (534 aa).

The region spanning 38-195 is the B12-binding domain; the sequence is KVLLLNPSAT…EHLNGNVSDD (158 aa). A Radical SAM core domain is found at 268–496; sequence TVGSRVGQLY…TYKQGIINVP (229 aa). Positions 282, 286, and 289 each coordinate [4Fe-4S] cluster.

This sequence belongs to the radical SAM superfamily. It depends on [4Fe-4S] cluster as a cofactor. The cofactor is methylcob(III)alamin.

It carries out the reaction cytidine 5'-{[hydroxy(2-hydroxyethyl)phosphonoyl]phosphate} + AH2 + 2 S-adenosyl-L-methionine = cytidine 5'-({hydroxy[(S)-2-hydroxypropyl]phosphonoyl}phosphate) + 5'-deoxyadenosine + L-methionine + A + S-adenosyl-L-homocysteine + 2 H(+). It participates in antibiotic biosynthesis; fosfomycin biosynthesis. In terms of biological role, involved in fosfomycin biosynthesis. Catalyzes the C-methylation of cytidylyl-2-hydroxyethylphosphonate (HEP-CMP) to form cytidylyl-2-hydroxypropylphosphonate (HPP-CMP). The C-methylation is not stereoselective and the ratio of (S)- to (R)-HPP-CMP is almost equal in vitro. The chain is Cytidylyl-2-hydroxyethylphosphonate methyltransferase from Streptomyces wedmorensis.